We begin with the raw amino-acid sequence, 479 residues long: Adenosylhomocysteinase (479 aa).

Thr56, Asp133, and Glu199 together coordinate substrate. 200-202 (TTT) is a binding site for NAD(+). Substrate is bound by residues Lys229 and Asp233. Residues Asn234, 263 to 268 (GYGDVG), Glu286, Asn321, 342 to 344 (IGH), and Asn390 contribute to the NAD(+) site.

This sequence belongs to the adenosylhomocysteinase family. As to quaternary structure, homotetramer. NAD(+) serves as cofactor.

The enzyme catalyses S-adenosyl-L-homocysteine + H2O = L-homocysteine + adenosine. It functions in the pathway amino-acid biosynthesis; L-homocysteine biosynthesis; L-homocysteine from S-adenosyl-L-homocysteine: step 1/1. Its function is as follows. Adenosylhomocysteine is a competitive inhibitor of S-adenosyl-L-methionine-dependent methyl transferase reactions; therefore adenosylhomocysteinase may play a key role in the control of methylations via regulation of the intracellular concentration of adenosylhomocysteine. The protein is Adenosylhomocysteinase of Plasmodium yoelii yoelii.